The primary structure comprises 359 residues: Outer membrane protein A (359 aa).

Positions 1 to 21 (MKKTAIALAVALAGFATVAQA) are cleaved as a signal peptide. The next 8 beta stranded transmembrane spans lie at 27 to 37 (TWYTGAKLGWS), 62 to 73 (QLGAGAFLGYQA), 77 to 85 (LGFELGYDW), 103 to 114 (QGVQLAAKLSYP), 119 to 127 (LDIYTRLGG), 154 to 163 (PLAAVGVEYA), 168 to 175 (WATRLDYQ), and 194 to 202 (MLSLGVSYR). 5 tandem repeats follow at residues 210-211 (AP), 212-213 (AP), 214-215 (AP), 216-217 (AP), and 218-219 (AP). The tract at residues 210–219 (APAPAPAPAP) is 5 X 2 AA tandem repeats of A-P. The OmpA-like domain occupies 221–351 (VETKRFTLKS…RVEIEVKGIK (131 aa)). Cys-322 and Cys-336 are disulfide-bonded.

This sequence belongs to the outer membrane OOP (TC 1.B.6) superfamily. OmpA family. In terms of assembly, monomer and homodimer.

It is found in the cell outer membrane. Its function is as follows. With TolR probably plays a role in maintaining the position of the peptidoglycan cell wall in the periplasm. Acts as a porin with low permeability that allows slow penetration of small solutes; an internal gate slows down solute passage. This Serratia marcescens protein is Outer membrane protein A.